A 132-amino-acid polypeptide reads, in one-letter code: Small ribosomal subunit protein eS17B (132 aa).

Phosphoserine is present on Ser43.

It belongs to the eukaryotic ribosomal protein eS17 family. Component of the small ribosomal subunit (SSU). Mature yeast ribosomes consist of a small (40S) and a large (60S) subunit. The 40S small subunit contains 1 molecule of ribosomal RNA (18S rRNA) and at least 33 different proteins. The large 60S subunit contains 3 rRNA molecules (25S, 5.8S and 5S rRNA) and at least 46 different proteins.

The protein resides in the cytoplasm. In terms of biological role, component of the ribosome, a large ribonucleoprotein complex responsible for the synthesis of proteins in the cell. The small ribosomal subunit (SSU) binds messenger RNAs (mRNAs) and translates the encoded message by selecting cognate aminoacyl-transfer RNA (tRNA) molecules. The large subunit (LSU) contains the ribosomal catalytic site termed the peptidyl transferase center (PTC), which catalyzes the formation of peptide bonds, thereby polymerizing the amino acids delivered by tRNAs into a polypeptide chain. The nascent polypeptides leave the ribosome through a tunnel in the LSU and interact with protein factors that function in enzymatic processing, targeting, and the membrane insertion of nascent chains at the exit of the ribosomal tunnel. In Schizosaccharomyces pombe (strain 972 / ATCC 24843) (Fission yeast), this protein is Small ribosomal subunit protein eS17B (rps1702).